The following is a 130-amino-acid chain: Glycine cleavage system H protein (130 aa).

In terms of domain architecture, Lipoyl-binding spans 23–105 (IGIIGITDFA…YGKGWMIKVE (83 aa)). Lysine 64 is subject to N6-lipoyllysine.

The protein belongs to the GcvH family. The glycine cleavage system is composed of four proteins: P, T, L and H. The cofactor is (R)-lipoate.

Functionally, the glycine cleavage system catalyzes the degradation of glycine. The H protein shuttles the methylamine group of glycine from the P protein to the T protein. The chain is Glycine cleavage system H protein from Carboxydothermus hydrogenoformans (strain ATCC BAA-161 / DSM 6008 / Z-2901).